The chain runs to 62 residues: Photosystem II reaction center protein Z (62 aa).

Transmembrane regions (helical) follow at residues Ala8 to Ala28 and Phe41 to Ile61.

The protein belongs to the PsbZ family. As to quaternary structure, PSII is composed of 1 copy each of membrane proteins PsbA, PsbB, PsbC, PsbD, PsbE, PsbF, PsbH, PsbI, PsbJ, PsbK, PsbL, PsbM, PsbT, PsbY, PsbZ, Psb30/Ycf12, at least 3 peripheral proteins of the oxygen-evolving complex and a large number of cofactors. It forms dimeric complexes.

Its subcellular location is the plastid. It is found in the chloroplast thylakoid membrane. Its function is as follows. May control the interaction of photosystem II (PSII) cores with the light-harvesting antenna, regulates electron flow through the 2 photosystem reaction centers. PSII is a light-driven water plastoquinone oxidoreductase, using light energy to abstract electrons from H(2)O, generating a proton gradient subsequently used for ATP formation. This Drimys granadensis protein is Photosystem II reaction center protein Z.